Reading from the N-terminus, the 556-residue chain is Formate--tetrahydrofolate ligase (556 aa).

An ATP-binding site is contributed by 65–72 (TPAGEGKT).

Belongs to the formate--tetrahydrofolate ligase family.

It carries out the reaction (6S)-5,6,7,8-tetrahydrofolate + formate + ATP = (6R)-10-formyltetrahydrofolate + ADP + phosphate. It participates in one-carbon metabolism; tetrahydrofolate interconversion. This Heliobacterium modesticaldum (strain ATCC 51547 / Ice1) protein is Formate--tetrahydrofolate ligase.